A 243-amino-acid chain; its full sequence is UPF0502 protein Rmet_3697 (243 aa).

Residues 1–11 (MTDTPDTPDTP) show a composition bias toward low complexity. Residues 1–23 (MTDTPDTPDTPMATGASSRPPLR) are disordered.

The protein belongs to the UPF0502 family.

The sequence is that of UPF0502 protein Rmet_3697 from Cupriavidus metallidurans (strain ATCC 43123 / DSM 2839 / NBRC 102507 / CH34) (Ralstonia metallidurans).